A 231-amino-acid polypeptide reads, in one-letter code: Flagellar L-ring protein 2 (231 aa).

The first 15 residues, 1–15, serve as a signal peptide directing secretion; the sequence is MKNLILILPLLMLTG. Cysteine 16 carries the N-palmitoyl cysteine lipid modification. The S-diacylglycerol cysteine moiety is linked to residue cysteine 16. Positions 30–54 are disordered; that stretch reads SPVGSGLRTQADPIPVTPRMRTPVS.

The protein belongs to the FlgH family. As to quaternary structure, the basal body constitutes a major portion of the flagellar organelle and consists of four rings (L,P,S, and M) mounted on a central rod.

It is found in the cell outer membrane. The protein resides in the bacterial flagellum basal body. In terms of biological role, assembles around the rod to form the L-ring and probably protects the motor/basal body from shearing forces during rotation. This Bradyrhizobium diazoefficiens (strain JCM 10833 / BCRC 13528 / IAM 13628 / NBRC 14792 / USDA 110) protein is Flagellar L-ring protein 2.